The sequence spans 314 residues: Dual specificity protein phosphatase 2 (314 aa).

The 122-residue stretch at glutamate 23 to serine 144 folds into the Rhodanese domain. The region spanning glycine 172 to cysteine 313 is the Tyrosine-protein phosphatase domain. Cysteine 257 serves as the catalytic Phosphocysteine intermediate.

The protein belongs to the protein-tyrosine phosphatase family. Non-receptor class dual specificity subfamily. In terms of assembly, interacts with MAPK14; this interaction does not lead to catalytic activation of DUSP2 and dephosphrylation of MAPK14. In terms of tissue distribution, expressed in hematopoietic tissues.

It localises to the nucleus. The enzyme catalyses O-phospho-L-tyrosyl-[protein] + H2O = L-tyrosyl-[protein] + phosphate. It carries out the reaction O-phospho-L-threonyl-[protein] + H2O = L-threonyl-[protein] + phosphate. Functionally, dephosphorylates both phosphorylated Thr and Tyr residues in MAPK1, and dephosphorylation of phosphotyrosine is slightly faster than that of phosphothreonine. Can dephosphorylate MAPK1. The protein is Dual specificity protein phosphatase 2 of Homo sapiens (Human).